A 234-amino-acid polypeptide reads, in one-letter code: UPF0173 metal-dependent hydrolase Rleg2_1519 (234 aa).

Belongs to the UPF0173 family.

The protein is UPF0173 metal-dependent hydrolase Rleg2_1519 of Rhizobium leguminosarum bv. trifolii (strain WSM2304).